Here is a 132-residue protein sequence, read N- to C-terminus: Small ribosomal subunit protein uS8 (132 aa).

The protein belongs to the universal ribosomal protein uS8 family. As to quaternary structure, part of the 30S ribosomal subunit. Contacts proteins S5 and S12.

In terms of biological role, one of the primary rRNA binding proteins, it binds directly to 16S rRNA central domain where it helps coordinate assembly of the platform of the 30S subunit. This chain is Small ribosomal subunit protein uS8, found in Brucella abortus (strain S19).